We begin with the raw amino-acid sequence, 1222 residues long: ATP-dependent helicase/nuclease subunit A (1222 aa).

A UvrD-like helicase ATP-binding domain is found at 39 to 495 (QKRTAQQIEA…ILLKENFRSQ (457 aa)). 60 to 67 (ASAGSGKT) is an ATP binding site. A UvrD-like helicase C-terminal domain is found at 524–810 (QLIAGSHAQT…NLMTIHKSKG (287 aa)).

The protein belongs to the helicase family. AddA subfamily. As to quaternary structure, heterodimer of AddA and AddB/RexB. It depends on Mg(2+) as a cofactor.

It catalyses the reaction Couples ATP hydrolysis with the unwinding of duplex DNA by translocating in the 3'-5' direction.. The catalysed reaction is ATP + H2O = ADP + phosphate + H(+). In terms of biological role, the heterodimer acts as both an ATP-dependent DNA helicase and an ATP-dependent, dual-direction single-stranded exonuclease. Recognizes the chi site generating a DNA molecule suitable for the initiation of homologous recombination. The AddA nuclease domain is required for chi fragment generation; this subunit has the helicase and 3' -&gt; 5' nuclease activities. The protein is ATP-dependent helicase/nuclease subunit A of Streptococcus pyogenes serotype M49 (strain NZ131).